The primary structure comprises 389 residues: Phosphoribosylformylglycinamidine cyclo-ligase, chloroplastic (389 aa).

A chloroplast-targeting transit peptide spans 1 to 58 (MEARILQSSSSCYSSLYAVNRSRFSSVSSPKPFSVSFAQTTRTRTRVLSMSKKDGRTD). Positions 46 to 65 (RVLSMSKKDGRTDKDDDTDS) are disordered.

The protein belongs to the AIR synthase family.

The protein resides in the plastid. Its subcellular location is the chloroplast. It catalyses the reaction 2-formamido-N(1)-(5-O-phospho-beta-D-ribosyl)acetamidine + ATP = 5-amino-1-(5-phospho-beta-D-ribosyl)imidazole + ADP + phosphate + H(+). The protein operates within purine metabolism; IMP biosynthesis via de novo pathway; 5-amino-1-(5-phospho-D-ribosyl)imidazole from N(2)-formyl-N(1)-(5-phospho-D-ribosyl)glycinamide: step 2/2. This Arabidopsis thaliana (Mouse-ear cress) protein is Phosphoribosylformylglycinamidine cyclo-ligase, chloroplastic (PUR5).